The following is a 555-amino-acid chain: uncharacterized protein (555 aa).

The first 28 residues, 1-28, serve as a signal peptide directing secretion; that stretch reads MRSGLFGVLRWTAVGLVATLVASLALTA. The N-palmitoyl cysteine moiety is linked to residue Cys-29. The S-diacylglycerol cysteine moiety is linked to residue Cys-29.

This sequence to M.tuberculosis Rv2585c and M.bovis Mb2616c.

Its subcellular location is the cell membrane. This is an uncharacterized protein from Mycobacterium leprae (strain TN).